We begin with the raw amino-acid sequence, 208 residues long: Ribosomal RNA small subunit methyltransferase G (208 aa).

Residues Gly77, Leu82, 128–129, and Arg142 each bind S-adenosyl-L-methionine; that span reads VE.

It belongs to the methyltransferase superfamily. RNA methyltransferase RsmG family.

The protein resides in the cytoplasm. It catalyses the reaction guanosine(527) in 16S rRNA + S-adenosyl-L-methionine = N(7)-methylguanosine(527) in 16S rRNA + S-adenosyl-L-homocysteine. Specifically methylates the N7 position of guanine in position 527 of 16S rRNA. The polypeptide is Ribosomal RNA small subunit methyltransferase G (Chromohalobacter salexigens (strain ATCC BAA-138 / DSM 3043 / CIP 106854 / NCIMB 13768 / 1H11)).